We begin with the raw amino-acid sequence, 538 residues long: ATP synthase subunit beta, mitochondrial (538 aa).

Residue glycine 215 to threonine 222 coordinates ATP.

Belongs to the ATPase alpha/beta chains family. As to quaternary structure, subunit of the F-type ATPase which has 2 components, CF(1) - the catalytic core - and CF(0) - the membrane proton channel. Interacts (via N-terminus) with lov-1 (via PLAT domain). As to expression, expressed in three categories of adult male sensory neurons: tail ray B neurons, HOB hook neuron and head cephalic (CEM) neurons.

It localises to the cell projection. Its subcellular location is the cilium. The protein resides in the mitochondrion. It is found in the mitochondrion inner membrane. The catalysed reaction is ATP + H2O + 4 H(+)(in) = ADP + phosphate + 5 H(+)(out). In terms of biological role, mitochondrial membrane ATP synthase (F(1)F(0) ATP synthase or Complex V) produces ATP from ADP in the presence of a proton gradient across the membrane which is generated by electron transport complexes of the respiratory chain. F-type ATPases consist of two structural domains, F(1) - containing the extramembraneous catalytic core, and F(0) - containing the membrane proton channel, linked together by a central stalk and a peripheral stalk. During catalysis, ATP synthesis in the catalytic domain of F(1) is coupled via a rotary mechanism of the central stalk subunits to proton translocation. Subunits alpha and beta form the catalytic core in F(1). Rotation of the central stalk against the surrounding subunits leads to hydrolysis of ATP in three separate catalytic sites on the beta subunits. Required during male mating behavior for the response to hermaphrodite contact, acting with lov-1 and pkd-2. May be involved in polycystin signaling. This is ATP synthase subunit beta, mitochondrial from Caenorhabditis elegans.